Here is a 608-residue protein sequence, read N- to C-terminus: AAA ATPase forming ring-shaped complexes (608 aa).

The stretch at 45-79 (AQEYDAVLRRLSAAEATRDNMSRQIRGAGEKNRKL) forms a coiled coil. ATP is bound at residue 302–307 (GNGKTM).

The protein belongs to the AAA ATPase family. Homohexamer. Assembles into a hexameric ring structure.

This is AAA ATPase forming ring-shaped complexes from Rothia mucilaginosa (strain DY-18) (Stomatococcus mucilaginosus).